Consider the following 296-residue polypeptide: Zinc finger protein 75A (296 aa).

The 66-residue stretch at 1–66 (MYFSQEEWEL…VSPEFKDSAG (66 aa)) folds into the KRAB domain. C2H2-type zinc fingers lie at residues 161–183 (FKCQECGKTFRVSSDLIKHQRIH), 189–211 (YKCQQCDKRFRWSSDLNKHLTTH), 217–239 (YKCSWCGKSFSQNTNLHTHQRTH), 245–267 (FTCHECGKKFSQNSHLIKHRRTH), and 273–295 (YTCSICRRNFSRRSSLLRHQKLH).

This sequence belongs to the krueppel C2H2-type zinc-finger protein family.

The protein localises to the nucleus. Its function is as follows. May be involved in transcriptional regulation. This Homo sapiens (Human) protein is Zinc finger protein 75A (ZNF75A).